The following is a 309-amino-acid chain: Probable manganese-dependent inorganic pyrophosphatase (309 aa).

Residues histidine 9, aspartate 13, aspartate 15, aspartate 75, histidine 97, and aspartate 149 each coordinate Mn(2+).

It belongs to the PPase class C family. Mn(2+) serves as cofactor.

The protein resides in the cytoplasm. It catalyses the reaction diphosphate + H2O = 2 phosphate + H(+). The protein is Probable manganese-dependent inorganic pyrophosphatase of Lactiplantibacillus plantarum (strain ATCC BAA-793 / NCIMB 8826 / WCFS1) (Lactobacillus plantarum).